The following is a 64-amino-acid chain: Conotoxin Ts-011 (64 aa).

An N-terminal signal peptide occupies residues 1–22; the sequence is MHCLPVLVILLLLIASTPSVDA. Residues 23-52 constitute a propeptide that is removed on maturation; it reads RPKTKDDVPPASFHGADDANRILQTLWNLR. The residue at position 63 (Ile63) is an Isoleucine amide.

It belongs to the conotoxin T superfamily. Contains 2 disulfide bonds that can be either 'C1-C3, C2-C4' or 'C1-C4, C2-C3', since these disulfide connectivities have been observed for conotoxins with cysteine framework V (for examples, see AC P0DQQ7 and AC P81755). In terms of tissue distribution, expressed by the venom duct.

The protein resides in the secreted. This Conus tessulatus (Tessellate cone) protein is Conotoxin Ts-011.